The chain runs to 611 residues: Dihydroxy-acid dehydratase (611 aa).

Asp81 contacts Mg(2+). Residue Cys122 participates in [2Fe-2S] cluster binding. Mg(2+) contacts are provided by Asp123 and Lys124. Lys124 carries the N6-carboxylysine modification. Cys195 serves as a coordination point for [2Fe-2S] cluster. Glu491 provides a ligand contact to Mg(2+). Catalysis depends on Ser517, which acts as the Proton acceptor.

This sequence belongs to the IlvD/Edd family. As to quaternary structure, homodimer. Requires [2Fe-2S] cluster as cofactor. It depends on Mg(2+) as a cofactor.

The enzyme catalyses (2R)-2,3-dihydroxy-3-methylbutanoate = 3-methyl-2-oxobutanoate + H2O. The catalysed reaction is (2R,3R)-2,3-dihydroxy-3-methylpentanoate = (S)-3-methyl-2-oxopentanoate + H2O. It participates in amino-acid biosynthesis; L-isoleucine biosynthesis; L-isoleucine from 2-oxobutanoate: step 3/4. The protein operates within amino-acid biosynthesis; L-valine biosynthesis; L-valine from pyruvate: step 3/4. Functionally, functions in the biosynthesis of branched-chain amino acids. Catalyzes the dehydration of (2R,3R)-2,3-dihydroxy-3-methylpentanoate (2,3-dihydroxy-3-methylvalerate) into 2-oxo-3-methylpentanoate (2-oxo-3-methylvalerate) and of (2R)-2,3-dihydroxy-3-methylbutanoate (2,3-dihydroxyisovalerate) into 2-oxo-3-methylbutanoate (2-oxoisovalerate), the penultimate precursor to L-isoleucine and L-valine, respectively. The protein is Dihydroxy-acid dehydratase of Histophilus somni (strain 129Pt) (Haemophilus somnus).